The following is a 251-amino-acid chain: HTH-type transcriptional regulator IolR (251 aa).

An HTH deoR-type domain is found at 1 to 57 (MKLMRIQEMEEYILSHGTVSLDELCQVFNVSKNTVRRDINKLTEKGAIEKVYGGVTS). A DNA-binding region (H-T-H motif) is located at residues 19 to 38 (VSLDELCQVFNVSKNTVRRD).

Iol operon repressor. This chain is HTH-type transcriptional regulator IolR (iolR), found in Bacillus subtilis (strain 168).